The sequence spans 735 residues: Peroxisomal multifunctional enzyme type 2 (735 aa).

Residues methionine 1–glutamate 305 are (3R)-hydroxyacyl-CoA dehydrogenase. Residues leucine 13–isoleucine 37, leucine 21, and aspartate 40 contribute to the NAD(+) site. Lysine 46 carries the post-translational modification N6-acetyllysine; alternate. Lysine 46 is modified (N6-succinyllysine; alternate). Phosphoserine is present on serine 52. An N6-succinyllysine mark is found at lysine 57 and lysine 68. Serine 75–valine 76 provides a ligand contact to NAD(+). At lysine 84 the chain carries N6-succinyllysine. Position 99 (asparagine 99) interacts with NAD(+). Serine 151 contributes to the substrate binding site. Tyrosine 164 functions as the Proton acceptor in the catalytic mechanism. NAD(+) contacts are provided by residues tyrosine 164–lysine 168 and alanine 196–arginine 199. At threonine 265 the chain carries Phosphothreonine. Lysine 275 bears the N6-succinyllysine mark. 2 positions are modified to phosphoserine: serine 304 and serine 308. The segment at serine 321–leucine 621 is enoyl-CoA hydratase 2. Residue lysine 355 is modified to N6-succinyllysine. Histidine 405–glycine 406 lines the (3R)-3-hydroxydecanoyl-CoA pocket. The residue at position 423 (lysine 423) is an N6-succinyllysine. (3R)-3-hydroxydecanoyl-CoA is bound by residues lysine 434, aspartate 509–histidine 514, glycine 532, and phenylalanine 562. Positions valine 483–asparagine 599 constitute a MaoC-like domain. N6-acetyllysine is present on lysine 564. N6-succinyllysine occurs at positions 578 and 662. The SCP2 domain maps to serine 623–leucine 735. An N6-acetyllysine modification is found at lysine 668. Glutamine 705 is a binding site for substrate. The residue at position 706 (lysine 706) is an N6-acetyllysine. Glutamine 723 is a binding site for substrate. Lysine 724 is modified (N6-succinyllysine). A Microbody targeting signal motif is present at residues alanine 733–leucine 735.

Belongs to the short-chain dehydrogenases/reductases (SDR) family. In terms of assembly, homodimer. As to expression, present in many tissues with highest concentrations in liver and kidney.

The protein resides in the peroxisome. It carries out the reaction a (3R)-3-hydroxyacyl-CoA + NAD(+) = a 3-oxoacyl-CoA + NADH + H(+). The enzyme catalyses (24R,25R)-3alpha,7alpha,12alpha,24-tetrahydroxy-5beta-cholestan-26-oyl-CoA = (24E)-3alpha,7alpha,12alpha-trihydroxy-5beta-cholest-24-en-26-oyl-CoA + H2O. The catalysed reaction is a (3R)-3-hydroxyacyl-CoA = a (2E)-enoyl-CoA + H2O. It catalyses the reaction (2E)-octenoyl-CoA + H2O = (3R)-hydroxyoctanoyl-CoA. It carries out the reaction (3R)-hydroxyoctanoyl-CoA + NAD(+) = 3-oxooctanoyl-CoA + NADH + H(+). The enzyme catalyses (3R)-hydroxyhexadecanoyl-CoA + NAD(+) = 3-oxohexadecanoyl-CoA + NADH + H(+). The catalysed reaction is (2E)-hexadecenedioyl-CoA + H2O = (3R)-hydroxyhexadecanedioyl-CoA. It catalyses the reaction (3R)-hydroxyhexadecanedioyl-CoA + NAD(+) = 3-oxohexadecanedioyl-CoA + NADH + H(+). It carries out the reaction (3R)-hydroxyhexadecanoyl-CoA = (2E)-hexadecenoyl-CoA + H2O. The enzyme catalyses (3R)-3-hydroxydecanoyl-CoA = (2E)-decenoyl-CoA + H2O. The catalysed reaction is (3R)-3-hydroxydecanoyl-CoA + NAD(+) = 3-oxodecanoyl-CoA + NADH + H(+). It catalyses the reaction (24R,25R)-3alpha,7alpha,12alpha,24-tetrahydroxy-5beta-cholestan-26-oyl-CoA + NAD(+) = 3alpha,7alpha,12alpha-trihydroxy-24-oxo-5beta-cholestan-26-oyl-CoA + NADH + H(+). The protein operates within lipid metabolism; fatty acid beta-oxidation. Functionally, bifunctional enzyme acting on the peroxisomal fatty acid beta-oxidation pathway. Catalyzes two of the four reactions in fatty acid degradation: hydration of 2-enoyl-CoA (trans-2-enoyl-CoA) to produce (3R)-3-hydroxyacyl-CoA, and dehydrogenation of (3R)-3-hydroxyacyl-CoA to produce 3-ketoacyl-CoA (3-oxoacyl-CoA), which is further metabolized by SCPx. Can use straight-chain and branched-chain fatty acids, as well as bile acid intermediates as substrates. This chain is Peroxisomal multifunctional enzyme type 2, found in Mus musculus (Mouse).